The sequence spans 102 residues: Small ribosomal subunit protein uS10 (102 aa).

Belongs to the universal ribosomal protein uS10 family. As to quaternary structure, part of the 30S ribosomal subunit.

Functionally, involved in the binding of tRNA to the ribosomes. The protein is Small ribosomal subunit protein uS10 of Cupriavidus metallidurans (strain ATCC 43123 / DSM 2839 / NBRC 102507 / CH34) (Ralstonia metallidurans).